A 297-amino-acid polypeptide reads, in one-letter code: Counting factor 45-1 (297 aa).

The signal sequence occupies residues 1-20 (MNKLISLLLVCLVAIALVNA). Positions 24-235 (IDFDSDTVNS…SASTGSGSGS (212 aa)) constitute a Ch-type lysozyme domain. Residues Asp29, Asp119, and Glu121 contribute to the active site. The N-linked (GlcNAc...) asparagine glycan is linked to Asn166. Residues 231–296 (SGSGSSSGSS…GSSSGSGSGS (66 aa)) form an S-G-S motif repeats region. The disordered stretch occupies residues 231 to 297 (SGSGSSSGSS…SSSGSGSGSS (67 aa)). Residues 234–275 (GSSSGSSSGSSSGSSSGSGSSSGSGSSSGSSSGSGSGSSSSG) are compositionally biased toward low complexity. The span at 276–297 (SGSGSGSSSGSGSSSGSGSGSS) shows a compositional bias: gly residues.

The protein belongs to the glycosyl hydrolase 25 family. Monomer. Component of the counting factor (CF) complex, which includes cf60, cf50, cf45-1 and ctnA.

Its subcellular location is the secreted. Cell-counting factor that limits the maximum size of the multicellular structure during aggregation. The chain is Counting factor 45-1 (cf45-1) from Dictyostelium discoideum (Social amoeba).